The following is an 899-amino-acid chain: Conserved oligomeric Golgi complex subunit 3 (899 aa).

The protein belongs to the COG3 family. As to quaternary structure, component of the conserved oligomeric Golgi complex which is composed of eight different subunits and is required for normal Golgi morphology and localization.

The protein localises to the golgi apparatus membrane. Involved in ER-Golgi transport. This chain is Conserved oligomeric Golgi complex subunit 3, found in Aedes aegypti (Yellowfever mosquito).